Consider the following 640-residue polypeptide: Antigenic protein NP1 (640 aa).

The region spanning 1–288 (VQVSIGKCNH…SYVNIAHAFG (288 aa)) is the Peptidase M60 domain. The PA14 domain occupies 463-615 (LDPHQVEYEV…TDQSSVNVSK (153 aa)).

The sequence is that of Antigenic protein NP1 from Entamoeba histolytica.